The chain runs to 116 residues: Large ribosomal subunit protein uL24 (116 aa).

Belongs to the universal ribosomal protein uL24 family. Part of the 50S ribosomal subunit.

Functionally, one of two assembly initiator proteins, it binds directly to the 5'-end of the 23S rRNA, where it nucleates assembly of the 50S subunit. In terms of biological role, located at the polypeptide exit tunnel on the outside of the subunit. This Methanosarcina barkeri (strain Fusaro / DSM 804) protein is Large ribosomal subunit protein uL24.